The primary structure comprises 490 residues: Katanin p60 ATPase-containing subunit A-like 1 (490 aa).

The residue at position 1 (M1) is an N-acetylmethionine. The tract at residues 95-178 is disordered; it reads DPAVWPPPVP…MQDGASDGDI (84 aa). A compositionally biased stretch (basic and acidic residues) spans 116–127; that stretch reads PNREVRPLRKDV. The segment covering 128 to 139 has biased composition (low complexity); that stretch reads AGVGARGPVGRA. Residues 143–169 show a composition bias toward basic and acidic residues; sequence SKSEKPSTNKDKDYRARGRDDKGRKNM. Position 174 is a phosphoserine (S174). 248–255 is a binding site for ATP; it reads GPPGTGKT.

Belongs to the AAA ATPase family. Katanin p60 subunit A1 subfamily. A-like 1 sub-subfamily. In terms of assembly, interacts with KATNB1 and KATNBL1.

It localises to the cytoplasm. Its subcellular location is the cytoskeleton. It is found in the spindle pole. The protein localises to the spindle. It carries out the reaction n ATP + n H2O + a microtubule = n ADP + n phosphate + (n+1) alpha/beta tubulin heterodimers.. Its function is as follows. Regulates microtubule dynamics in Sertoli cells, a process that is essential for spermiogenesis and male fertility. Severs microtubules in an ATP-dependent manner, promoting rapid reorganization of cellular microtubule arrays. Has microtubule-severing activity in vitro. The polypeptide is Katanin p60 ATPase-containing subunit A-like 1 (Sorex araneus (Eurasian common shrew)).